We begin with the raw amino-acid sequence, 470 residues long: Pyoverdine export outer membrane protein OpmQ (470 aa).

An N-terminal signal peptide occupies residues 1–18; that stretch reads MTLPRHLCLLPLSLSLLA. The N-palmitoyl cysteine moiety is linked to residue C19. The S-diacylglycerol cysteine moiety is linked to residue C19.

Belongs to the outer membrane factor (OMF) (TC 1.B.17) family. In terms of assembly, part of the tripartite efflux system PvdRT-OpmQ, which is composed of an inner membrane component with both ATPase and permease domains, PvdT, a periplasmic membrane fusion protein, PvdR, and an outer membrane component, OpmQ.

The protein localises to the cell outer membrane. Part of the tripartite efflux system PvdRT-OpmQ required for the secretion into the extracellular milieu of the siderophore pyoverdine (PVD), which is involved in iron acquisition. The system is responsible for export of newly synthesized PVD after the final steps of biosynthesis have taken place in the periplasm. It is also responsible for recycling of PVD after internalization of ferri-PVD into the periplasm by the outer-membrane receptor FpvA and release of iron from PVD, thus making PVD available for new cycles of iron uptake. Contributes to resistance against ampicillin. This is Pyoverdine export outer membrane protein OpmQ from Pseudomonas putida (strain ATCC 47054 / DSM 6125 / CFBP 8728 / NCIMB 11950 / KT2440).